Consider the following 295-residue polypeptide: HTH-type transcriptional regulator ShiR (295 aa).

Residues M1 to T58 enclose the HTH lysR-type domain. A DNA-binding region (H-T-H motif) is located at residues F18–R37.

This sequence belongs to the LysR transcriptional regulatory family.

Activates expression of the shikimate transporter ShiA in the presence of shikimate. Binds to the shiA promoter region. The protein is HTH-type transcriptional regulator ShiR of Corynebacterium glutamicum (strain R).